We begin with the raw amino-acid sequence, 1142 residues long: E3 ubiquitin-protein ligase TRIM33 (1142 aa).

Over residues 1–18 (MAENKGGGEAESGGGGSG) the composition is skewed to gly residues. The disordered stretch occupies residues 1 to 132 (MAENKGGGEA…PGSSSGPPLG (132 aa)). The necessary for E3 ubiquitin-protein ligase activity and repression of SMAD4 signaling and transcriptional repression stretch occupies residues 1 to 163 (MAENKGGGEA…AEPKLLPCLH (163 aa)). Residues 19–42 (SAPVTAGAAGPTAQEAEPPLAAVL) are compositionally biased toward low complexity. Positions 52 to 64 (RAGAEGGAAGPDD) are enriched in gly residues. A compositionally biased stretch (low complexity) spans 65–99 (GGVAAASSSSAPAASVPAASVGSAVPGGAASTPAP). Positions 100-122 (AAAPAPAPAPAPAPAPAPAPAPA) are enriched in pro residues. An RING-type zinc finger spans residues 141 to 201 (CAVCQQSLQS…VGVIRCPVCR (61 aa)). 2 consecutive B box-type zinc fingers follow at residues 228 to 275 (KSEQ…IRKK) and 287 to 328 (QRPV…YQFL). The Zn(2+) site is built by Cys-233, Cys-236, Cys-257, His-261, Cys-292, His-295, Cys-315, and His-320. The tract at residues 315-417 (CQLLEHKEHR…QMKLLQQQND (103 aa)) is necessary for oligomerization. Positions 315 to 417 (CQLLEHKEHR…QMKLLQQQND (103 aa)) form a coiled coil. Glycyl lysine isopeptide (Lys-Gly) (interchain with G-Cter in SUMO2) cross-links involve residues Lys-345, Lys-350, Lys-497, and Lys-520. An Asymmetric dimethylarginine; alternate modification is found at Arg-531. Residue Arg-531 is modified to Omega-N-methylarginine; alternate. Residue Lys-543 forms a Glycyl lysine isopeptide (Lys-Gly) (interchain with G-Cter in SUMO2) linkage. Arg-551 carries the omega-N-methylarginine modification. Residue Arg-593 is modified to Asymmetric dimethylarginine. Arg-607 is subject to Asymmetric dimethylarginine; alternate. Arg-607 carries the omega-N-methylarginine; alternate modification. Arg-614 and Arg-620 each carry asymmetric dimethylarginine. Disordered stretches follow at residues 657 to 676 (PTSPTTATMANANRGPTSPS), 688 to 707 (NPENLPSLPDIPPIQLEDAG), and 718 to 834 (YISG…PPLS). A compositionally biased stretch (low complexity) spans 738 to 774 (PSALSPGSSGLSNSHTPVRPPSTSSTGSRGSCGSSGR). Composition is skewed to basic and acidic residues over residues 775-794 (TAEKSAHSFKSDQVKVKQEP) and 808-817 (KQEKTEDGRR). Lys-778 and Lys-784 each carry N6-acetyllysine; alternate. Glycyl lysine isopeptide (Lys-Gly) (interchain with G-Cter in SUMO2); alternate cross-links involve residues Lys-778 and Lys-784. Residue Lys-789 forms a Glycyl lysine isopeptide (Lys-Gly) (interchain with G-Cter in SUMO2) linkage. Glycyl lysine isopeptide (Lys-Gly) (interchain with G-Cter in SUMO2); alternate cross-links involve residues Lys-791 and Lys-808. Residues Lys-791 and Lys-808 each participate in a glycyl lysine isopeptide (Lys-Gly) (interchain with G-Cter in SUMO1); alternate cross-link. Lys-808 carries the N6-acetyllysine; alternate modification. Residue Lys-811 forms a Glycyl lysine isopeptide (Lys-Gly) (interchain with G-Cter in SUMO2) linkage. Ser-818 bears the Phosphoserine mark. Residues 822 to 834 (LSSPESSLTPPLS) show a composition bias toward low complexity. Thr-830 carries the post-translational modification Phosphothreonine. Lys-876 is covalently cross-linked (Glycyl lysine isopeptide (Lys-Gly) (interchain with G-Cter in SUMO2)). Ser-877 is subject to Phosphoserine. The PHD-type zinc-finger motif lies at 902–949 (EDWCAVCQNGGDLLCCEKCPKVFHLTCHVPTLLSFPSGDWICTFCRDI). Lys-966 carries the N6-acetyllysine modification. At Lys-968 the chain carries N6-acetyllysine; alternate. Lys-968 is covalently cross-linked (Glycyl lysine isopeptide (Lys-Gly) (interchain with G-Cter in SUMO2); alternate). The 124-residue stretch at 972–1095 (GLSPVDQRKC…LYFEDKLSEI (124 aa)) folds into the Bromo domain. Residues Lys-1022 and Lys-1058 each participate in a glycyl lysine isopeptide (Lys-Gly) (interchain with G-Cter in SUMO2) cross-link. Thr-1066 is modified (phosphothreonine). A Glycyl lysine isopeptide (Lys-Gly) (interchain with G-Cter in SUMO2) cross-link involves residue Lys-1072. The interval 1103–1142 (PLPEFEQDEDDGEVTEDSDEDFIQPRRKRLKSDERPVHIK) is disordered. A compositionally biased stretch (acidic residues) spans 1107–1124 (FEQDEDDGEVTEDSDEDF). Residue Thr-1117 is modified to Phosphothreonine. The residue at position 1120 (Ser-1120) is a Phosphoserine. Lys-1133 is covalently cross-linked (Glycyl lysine isopeptide (Lys-Gly) (interchain with G-Cter in SUMO2)). The span at 1133-1142 (KSDERPVHIK) shows a compositional bias: basic and acidic residues. At Ser-1134 the chain carries Phosphoserine.

The protein belongs to the TRIM/RBCC family. Homooligomer and heterooligomer with TRIM24 and TRIM28 family members. Interacts with SMAD4 in unstimulated cells. Found in a complex with SMAD2 and SMAD3 upon addition of TGF-beta. Interacts with SMAD2 and SMAD3. Interacts with SMAD4 under basal and induced conditions and, upon TGF-beta signaling, with activated SMAD2. Forms a ternary complex with SMAD4 and SMAD2 upon TGF-beta signaling. Post-translationally, sumoylated with SUMO1. In terms of tissue distribution, ubiquitous with high level in testis.

It localises to the nucleus. It catalyses the reaction S-ubiquitinyl-[E2 ubiquitin-conjugating enzyme]-L-cysteine + [acceptor protein]-L-lysine = [E2 ubiquitin-conjugating enzyme]-L-cysteine + N(6)-ubiquitinyl-[acceptor protein]-L-lysine.. It functions in the pathway protein modification; protein ubiquitination. In terms of biological role, acts as an E3 ubiquitin-protein ligase. Promotes SMAD4 ubiquitination, nuclear exclusion and degradation via the ubiquitin proteasome pathway. May act as a transcriptional repressor. Inhibits the transcriptional response to TGF-beta/BMP signaling cascade. Plays a role in the control of cell proliferation. Its association with SMAD2 and SMAD3 stimulates erythroid differentiation of hematopoietic stem/progenitor. Monoubiquitinates SMAD4 and acts as an inhibitor of SMAD4-dependent TGF-beta/BMP signaling cascade (Monoubiquitination of SMAD4 hampers its ability to form a stable complex with activated SMAD2/3 resulting in inhibition of TGF-beta/BMP signaling cascade). The chain is E3 ubiquitin-protein ligase TRIM33 (Trim33) from Mus musculus (Mouse).